We begin with the raw amino-acid sequence, 310 residues long: Ribose-phosphate pyrophosphokinase (310 aa).

Residues 34 to 36 and 93 to 94 contribute to the ATP site; these read DME and RQ. The Mg(2+) site is built by His127 and Asp167. Lys190 is an active-site residue. D-ribose 5-phosphate is bound by residues Arg192, Asp216, and 220-224; that span reads DSGGT.

The protein belongs to the ribose-phosphate pyrophosphokinase family. Class I subfamily. As to quaternary structure, homohexamer. Mg(2+) is required as a cofactor.

The protein localises to the cytoplasm. It catalyses the reaction D-ribose 5-phosphate + ATP = 5-phospho-alpha-D-ribose 1-diphosphate + AMP + H(+). It participates in metabolic intermediate biosynthesis; 5-phospho-alpha-D-ribose 1-diphosphate biosynthesis; 5-phospho-alpha-D-ribose 1-diphosphate from D-ribose 5-phosphate (route I): step 1/1. Its function is as follows. Involved in the biosynthesis of the central metabolite phospho-alpha-D-ribosyl-1-pyrophosphate (PRPP) via the transfer of pyrophosphoryl group from ATP to 1-hydroxyl of ribose-5-phosphate (Rib-5-P). The protein is Ribose-phosphate pyrophosphokinase of Granulibacter bethesdensis (strain ATCC BAA-1260 / CGDNIH1).